An 879-amino-acid chain; its full sequence is Alanine--tRNA ligase (879 aa).

Residues His-566, His-570, Cys-668, and His-672 each contribute to the Zn(2+) site.

The protein belongs to the class-II aminoacyl-tRNA synthetase family. The cofactor is Zn(2+).

The protein localises to the cytoplasm. It catalyses the reaction tRNA(Ala) + L-alanine + ATP = L-alanyl-tRNA(Ala) + AMP + diphosphate. Catalyzes the attachment of alanine to tRNA(Ala) in a two-step reaction: alanine is first activated by ATP to form Ala-AMP and then transferred to the acceptor end of tRNA(Ala). Also edits incorrectly charged Ser-tRNA(Ala) and Gly-tRNA(Ala) via its editing domain. The chain is Alanine--tRNA ligase from Clostridium botulinum (strain Loch Maree / Type A3).